Consider the following 582-residue polypeptide: Protein NARROW LEAF 1 (582 aa).

Disordered regions lie at residues 1-26 (MKPSDDKAQLSGLAQSEESSLDVDHQ) and 531-582 (GMSP…DLEK). The span at 562-572 (LGDREPKRLRS) shows a compositional bias: basic and acidic residues. The Nuclear localization signal signature appears at 567 to 573 (PKRLRSD). Positions 573–582 (DSGSSLDLEK) are enriched in low complexity.

Expressed in leaf sheaths, leaf blades, culms and panicles. Preferentially expressed in vascular tissues in leaves and culms.

Its subcellular location is the nucleus. The protein localises to the nucleoplasm. The protein resides in the cytoplasm. In terms of biological role, involved in the regulation of lateral leaf growth. May be involved in the regulation of basipetal polar auxin transport (PAT) and vascular patterning in leaves. Controls photosynthesis rate by regulating carboxylation efficiency and consequently photosynthesis rate. Controls panicle and spikelet numbers, and grain yield. The sequence is that of Protein NARROW LEAF 1 from Oryza sativa subsp. japonica (Rice).